Here is a 331-residue protein sequence, read N- to C-terminus: Thiamine thiazole synthase (331 aa).

Residues Cys86, 107–108 (EA), Gly115, and Val183 each bind substrate. Cys220 bears the 2,3-didehydroalanine (Cys) mark. Residues Asp222, His237, Met289, and 299-301 (RMG) contribute to the substrate site.

The protein belongs to the THI4 family. In terms of assembly, homooctamer. The cofactor is Fe cation. In terms of processing, during the catalytic reaction, a sulfide is transferred from Cys-220 to a reaction intermediate, generating a dehydroalanine residue.

It is found in the cytoplasm. It localises to the nucleus. It catalyses the reaction [ADP-thiazole synthase]-L-cysteine + glycine + NAD(+) = [ADP-thiazole synthase]-dehydroalanine + ADP-5-ethyl-4-methylthiazole-2-carboxylate + nicotinamide + 3 H2O + 2 H(+). Its function is as follows. Involved in biosynthesis of the thiamine precursor thiazole. Catalyzes the conversion of NAD and glycine to adenosine diphosphate 5-(2-hydroxyethyl)-4-methylthiazole-2-carboxylic acid (ADT), an adenylated thiazole intermediate. The reaction includes an iron-dependent sulfide transfer from a conserved cysteine residue of the protein to a thiazole intermediate. The enzyme can only undergo a single turnover, which suggests it is a suicide enzyme. May have additional roles in adaptation to various stress conditions and in DNA damage tolerance. The chain is Thiamine thiazole synthase from Emericella nidulans (strain FGSC A4 / ATCC 38163 / CBS 112.46 / NRRL 194 / M139) (Aspergillus nidulans).